Consider the following 59-residue polypeptide: Large ribosomal subunit protein uL30 (59 aa).

The protein belongs to the universal ribosomal protein uL30 family. Part of the 50S ribosomal subunit.

The polypeptide is Large ribosomal subunit protein uL30 (Streptococcus agalactiae serotype Ia (strain ATCC 27591 / A909 / CDC SS700)).